The chain runs to 185 residues: Jasmonate-induced protein homolog (185 aa).

This sequence belongs to the jasmonate-induced protein family.

This chain is Jasmonate-induced protein homolog, found in Atriplex canescens (Fourwing saltbush).